The primary structure comprises 510 residues: GMP synthase [glutamine-hydrolyzing] (510 aa).

Residues 5-195 enclose the Glutamine amidotransferase type-1 domain; that stretch reads LVLVVDFGGQ…LFNVCNLKGD (191 aa). Residue Cys-82 is the Nucleophile of the active site. Active-site residues include His-169 and Glu-171. In terms of domain architecture, GMPS ATP-PPase spans 196–385; it reads WSMSSFAEQQ…LGIPHKLVWR (190 aa). Position 223–229 (223–229) interacts with ATP; it reads SGGVDSS.

As to quaternary structure, homodimer.

It catalyses the reaction XMP + L-glutamine + ATP + H2O = GMP + L-glutamate + AMP + diphosphate + 2 H(+). It functions in the pathway purine metabolism; GMP biosynthesis; GMP from XMP (L-Gln route): step 1/1. Catalyzes the synthesis of GMP from XMP. This Clostridium botulinum (strain ATCC 19397 / Type A) protein is GMP synthase [glutamine-hydrolyzing].